The chain runs to 657 residues: Heat shock protein hsp-6 (657 aa).

A mitochondrion-targeting transit peptide spans 1–27 (MLSARSFLSSARTIARSSLMSARSLSD). Residues 637 to 657 (KNSGGDAQEAKTAEEPKKEQN) are disordered. Basic and acidic residues predominate over residues 644–657 (QEAKTAEEPKKEQN).

It belongs to the heat shock protein 70 family.

Its subcellular location is the mitochondrion. The sequence is that of Heat shock protein hsp-6 from Caenorhabditis elegans.